Here is a 124-residue protein sequence, read N- to C-terminus: Large ribosomal subunit protein uL14 (124 aa).

Belongs to the universal ribosomal protein uL14 family. In terms of assembly, part of the 50S ribosomal subunit. Forms a cluster with proteins L3 and L19. In the 70S ribosome, L14 and L19 interact and together make contacts with the 16S rRNA in bridges B5 and B8.

In terms of biological role, binds to 23S rRNA. Forms part of two intersubunit bridges in the 70S ribosome. This chain is Large ribosomal subunit protein uL14, found in Mycoplasmoides gallisepticum (strain R(low / passage 15 / clone 2)) (Mycoplasma gallisepticum).